The chain runs to 277 residues: Release factor glutamine methyltransferase (277 aa).

S-adenosyl-L-methionine-binding positions include 119–123 (GTGCG), Asp-142, Trp-170, and Asn-184. A substrate-binding site is contributed by 184–187 (NPPY).

The protein belongs to the protein N5-glutamine methyltransferase family. PrmC subfamily.

It carries out the reaction L-glutaminyl-[peptide chain release factor] + S-adenosyl-L-methionine = N(5)-methyl-L-glutaminyl-[peptide chain release factor] + S-adenosyl-L-homocysteine + H(+). In terms of biological role, methylates the class 1 translation termination release factors RF1/PrfA and RF2/PrfB on the glutamine residue of the universally conserved GGQ motif. This chain is Release factor glutamine methyltransferase, found in Buchnera aphidicola subsp. Baizongia pistaciae (strain Bp).